Reading from the N-terminus, the 200-residue chain is uncharacterized protein (200 aa).

A signal peptide spans 1 to 24 (MSRVFSCVLRACVCAGLCCWVCMG). A disordered region spans residues 124–200 (GGRDLPMHGA…GEGGDNGEGE (77 aa)). Residues 184–200 (LGDEGETGEGGDNGEGE) are compositionally biased toward acidic residues.

This is an uncharacterized protein from Homo sapiens (Human).